Reading from the N-terminus, the 519-residue chain is Bifunctional dihydrofolate reductase-thymidylate synthase 1 (519 aa).

Position 2 is an N-acetylalanine (Ala2). A DHFR domain is found at 21-198 (TYQVVVAATK…LRFCFTTFVR (178 aa)). Substrate is bound at residue Val25. Residues Ala27 and 33–39 (GIGKDGK) each bind NADP(+). Substrate is bound at residue Asp47. NADP(+) contacts are provided by residues 71–73 (RKT) and 92–95 (LTRS). Ile134 provides a ligand contact to substrate. Residue 135-142 (GGGDILRE) coordinates NADP(+). Thr155 lines the substrate pocket. Residues 201 to 234 (SSADESSDESNGSQSLQFDGKKFLFLPKMVFDQH) are hinge. The thymidylate synthase stretch occupies residues 235-519 (EEFLYLNMVE…HKKIEMKMAV (285 aa)). Arg256 serves as a coordination point for dUMP. Cys401 is an active-site residue. DUMP is bound by residues His402, 420 to 424 (QRSAD), Asn432, and 462 to 464 (HVY).

It in the N-terminal section; belongs to the dihydrofolate reductase family. The protein in the C-terminal section; belongs to the thymidylate synthase family. As to quaternary structure, heterodimer or homodimer.

The enzyme catalyses (6S)-5,6,7,8-tetrahydrofolate + NADP(+) = 7,8-dihydrofolate + NADPH + H(+). It catalyses the reaction dUMP + (6R)-5,10-methylene-5,6,7,8-tetrahydrofolate = 7,8-dihydrofolate + dTMP. It participates in cofactor biosynthesis; tetrahydrofolate biosynthesis; 5,6,7,8-tetrahydrofolate from 7,8-dihydrofolate: step 1/1. Bifunctional enzyme. Involved in de novo dTMP biosynthesis. Key enzyme in folate metabolism. Can play two different roles depending on the source of dihydrofolate: de novo synthesis of tetrahydrofolate or recycling of the dihydrofolate released as one of the end products of the TS catalyzed reaction. Catalyzes an essential reaction for de novo glycine and purine synthesis, DNA precursor synthesis, and for the conversion of dUMP to dTMP. In Arabidopsis thaliana (Mouse-ear cress), this protein is Bifunctional dihydrofolate reductase-thymidylate synthase 1 (THY-1).